The primary structure comprises 312 residues: Aspartate carbamoyltransferase catalytic subunit (312 aa).

Carbamoyl phosphate is bound by residues Arg54 and Thr55. Lys83 is an L-aspartate binding site. Carbamoyl phosphate contacts are provided by Arg104, His132, and Gln135. Arg165 and Arg226 together coordinate L-aspartate. The carbamoyl phosphate site is built by Leu263 and Pro264.

The protein belongs to the aspartate/ornithine carbamoyltransferase superfamily. ATCase family. In terms of assembly, heterooligomer of catalytic and regulatory chains.

The catalysed reaction is carbamoyl phosphate + L-aspartate = N-carbamoyl-L-aspartate + phosphate + H(+). The protein operates within pyrimidine metabolism; UMP biosynthesis via de novo pathway; (S)-dihydroorotate from bicarbonate: step 2/3. In terms of biological role, catalyzes the condensation of carbamoyl phosphate and aspartate to form carbamoyl aspartate and inorganic phosphate, the committed step in the de novo pyrimidine nucleotide biosynthesis pathway. The sequence is that of Aspartate carbamoyltransferase catalytic subunit from Methanothermobacter thermautotrophicus (strain ATCC 29096 / DSM 1053 / JCM 10044 / NBRC 100330 / Delta H) (Methanobacterium thermoautotrophicum).